A 621-amino-acid chain; its full sequence is Altered inheritance of mitochondria protein 9, mitochondrial (621 aa).

The transit peptide at 1–40 (MIRSTTAKLGKRCATLRVRASPILRPLVATRCITNKADEV) directs the protein to the mitochondrion.

Belongs to the AIM9 family.

Its subcellular location is the mitochondrion. This Zygosaccharomyces rouxii (strain ATCC 2623 / CBS 732 / NBRC 1130 / NCYC 568 / NRRL Y-229) protein is Altered inheritance of mitochondria protein 9, mitochondrial (AIM9).